A 1322-amino-acid chain; its full sequence is Protein fantom (1322 aa).

Positions 1-22 (MVSARYPIEKWSRPQLEDHFHN) are cleaved as a signal peptide. Residues 15–89 (QLEDHFHNVV…MKLKAAKQQL (75 aa)) are a coiled coil. Over residues 108–119 (RSTFRQPPSTFR) the composition is skewed to polar residues. 3 disordered regions span residues 108 to 151 (RSTF…GEKL), 189 to 275 (KSSV…PDQT), and 392 to 418 (RIEEEKISHSPPPMTFEPIRKRHSQSE). Residues 195–217 (SSPPTRLSTSSSSKSSSSNNNND) show a composition bias toward low complexity. Positions 224 to 234 (ELEEMSEMSDD) are enriched in acidic residues. Positions 274 to 362 (QTEKVLLDKL…EDQKKFEAMR (89 aa)) form a coiled coil. The stretch at 456–538 (ASENSLARWQ…FMLEEQIRTI (83 aa)) forms a coiled coil. Disordered regions lie at residues 891 to 1094 (AELH…KPRN) and 1121 to 1149 (TDPLHFSVPPSESSSTSSPRRAEKAPVPL). Residues 918–927 (TDSSDTSFSH) show a composition bias toward low complexity. Positions 956–975 (SDGEEEADRIVFDDDDDEIE) are enriched in acidic residues. The segment covering 984 to 996 (RDPEPLEVPERQV) has biased composition (basic and acidic residues). Residues 1015-1029 (NGTNESKESTPVTQR) show a composition bias toward polar residues. Residues 1042–1067 (PELEPESGPEPEPVVESEPNEVAETE) show a composition bias toward acidic residues. A compositionally biased stretch (basic and acidic residues) spans 1068 to 1080 (EDRKRELKTEELK). Residues 1127–1139 (SVPPSESSSTSSP) show a composition bias toward low complexity.

Belongs to the RPGRIP1 family. As to expression, expressed at the transition zone at the base of cilia. Expressed in ciliated sensory neurons, including the amphid neurons in the head.

It is found in the cell projection. Its subcellular location is the cilium. Functionally, thought to have an important role in cilia formation and cilia-mediated chemosensation. Involved in the docking of other MKS/MKSR proteins localized to the transition zone of the cilia. In Caenorhabditis elegans, this protein is Protein fantom (mks-5).